Reading from the N-terminus, the 161-residue chain is uncharacterized protein (161 aa).

The signal sequence occupies residues 1–35; it reads MVMAMGFDTVVAAIMATAIIVAVAYTFLAGSTSIA.

This is an uncharacterized protein from Archaeoglobus fulgidus (strain ATCC 49558 / DSM 4304 / JCM 9628 / NBRC 100126 / VC-16).